The sequence spans 155 residues: Methylated-DNA--protein-cysteine methyltransferase (155 aa).

The active-site Nucleophile; methyl group acceptor is Cys119.

This sequence belongs to the MGMT family.

The protein resides in the cytoplasm. The enzyme catalyses a 6-O-methyl-2'-deoxyguanosine in DNA + L-cysteinyl-[protein] = S-methyl-L-cysteinyl-[protein] + a 2'-deoxyguanosine in DNA. The catalysed reaction is a 4-O-methyl-thymidine in DNA + L-cysteinyl-[protein] = a thymidine in DNA + S-methyl-L-cysteinyl-[protein]. Involved in the cellular defense against the biological effects of O6-methylguanine (O6-MeG) and O4-methylthymine (O4-MeT) in DNA. Repairs the methylated nucleobase in DNA by stoichiometrically transferring the methyl group to a cysteine residue in the enzyme. This is a suicide reaction: the enzyme is irreversibly inactivated. In Sulfolobus acidocaldarius (strain ATCC 33909 / DSM 639 / JCM 8929 / NBRC 15157 / NCIMB 11770), this protein is Methylated-DNA--protein-cysteine methyltransferase.